The sequence spans 710 residues: uncharacterized protein (710 aa).

The tract at residues 1 to 20 (MKQRQARLIGTPSQTRRQQE) is disordered. Residues 13–42 (SQTRRQQELAEKLEKVKEVLEDEKKRQFNE) adopt a coiled-coil conformation.

The protein belongs to the IIV-6 268L family.

This is an uncharacterized protein from Invertebrate iridescent virus 6 (IIV-6).